Consider the following 496-residue polypeptide: MTVFDIFTSSTFFTSPFPLTVGILSISLSGVLWYLRRAKAPTQADAPPVYPFDPTTLDRKECKPPILTFGNSMILPNRYAHEIRNNDLLSFRDGLEKDFLTTVPGLEALFTGTFHNDIVWDTASAFSRKIGLLIEPLSTETGIFLQENWSEDTEWHTIPLNESMQFLIAQLTARIFVGNELCRNRDWIQLALGYTANRAAAIKELHQYGRLIPIVHWFLPSCRALRACVRNARPLVEGILNTHRKKHQGEQKEESLDALSWIDGVAGETGVKYDPTLTQLRLAYAAVHTTSDMMTKVLAAICEHDELVKPLREEIVAVVKEHGWTEAALAKMLLLDSVLKETQRLEPLASFTLSRIAREGVTLNDGTRVPKGTQARLTTDNMWNSGIYPEAARFDGYRFVKLRDQDTATGASSGGLSFVSVSANHMGFGYGKHACPGRFFAGAETKIALCHILLKYDLELVDRELAGAKTDGMMIWRDKRAMLRVKRRSDDIGLEF.

Residues 12–34 traverse the membrane as a helical segment; that stretch reads FFTSPFPLTVGILSISLSGVLWY. Cys-435 is a heme binding site.

Belongs to the cytochrome P450 family. It depends on heme as a cofactor.

It is found in the membrane. It functions in the pathway secondary metabolite biosynthesis; terpenoid biosynthesis. Its function is as follows. Cytochrome P450 monooxygenase; part of the cluster A that mediates the biosynthesis of chevalone E and its oxidized derivatives that possess a unique five-membered lactone ring and can synergistically enhance the cytotoxicity of doxorubicin (DOX) in breast cancer cells. Within the pathway, cle4 is involved in hydroxylation of the chavalone E scaffold at positions C-11 and C-12 and contributes with cle2 to the production of seven oxidation derivatives. The molecular scaffold is commonly biosynthesized by a series of enzymes including the non-reducing polyketide synthase (NR-PKS) cle1 that produces the alpha-pyrone triacetic acid lactone (TAL); The membrane-bound prenyltransferase cle5 that accepts TAL as its substrate to perform a C-3 geranylgeranylation reaction, in which the pathway-dedicated GGPS cle6 is required to provide GGPP, the other substrate of cle5; the FAD-dependent monooxygenase Cle3 that forms an (S)-epoxide ring at the terminal olefin of the geranylgeranyl group; and the terpene cyclase Cle7 that catalyzes the cyclization of the prenyl group that yields the pentacyclic pathway intermediate chevalone E. Chevalone E can derivatize into seven new oxidized analogs by the cytochrome P450 monooxygenases cle2 (acting at C-20) and cle4 (acting at C-11 and C-12). In Aspergillus versicolor, this protein is Cytochrome P450 monooxygenase cle4.